We begin with the raw amino-acid sequence, 194 residues long: Early growth response protein 1 (194 aa).

3 C2H2-type zinc fingers span residues 1 to 18 (CDRR…IRIH), 24 to 46 (FQCR…IRTH), and 52 to 74 (FACD…TKIH). The disordered stretch occupies residues 66-88 (ERKRHTKIHLRQKDKKVEKAASV). The segment covering 69–79 (RHTKIHLRQKD) has biased composition (basic residues).

It belongs to the EGR C2H2-type zinc-finger protein family.

The protein localises to the nucleus. Its subcellular location is the cytoplasm. Functionally, transcriptional regulator. Recognizes and binds to the DNA sequence 5'-GCG(T/G)GGGCG-3'(EGR-site) in the promoter region of target genes. Binds double-stranded target DNA, irrespective of the cytosine methylation status. Regulates the transcription of numerous target genes, and thereby plays an important role in regulating the response to growth factors, DNA damage, and ischemia. Plays a role in the regulation of cell survival, proliferation and cell death. Mediates responses to ischemia and hypoxia; regulates the expression of proteins that are involved in inflammatory processes. Plays a role in regulating the expression of circadian clock genes. In Coturnix japonica (Japanese quail), this protein is Early growth response protein 1 (EGR1).